The sequence spans 116 residues: Peptidyl-tRNA hydrolase (116 aa).

The protein belongs to the PTH2 family.

It localises to the cytoplasm. The enzyme catalyses an N-acyl-L-alpha-aminoacyl-tRNA + H2O = an N-acyl-L-amino acid + a tRNA + H(+). Its function is as follows. The natural substrate for this enzyme may be peptidyl-tRNAs which drop off the ribosome during protein synthesis. This chain is Peptidyl-tRNA hydrolase, found in Methanopyrus kandleri (strain AV19 / DSM 6324 / JCM 9639 / NBRC 100938).